The chain runs to 182 residues: Adenine phosphoribosyltransferase (182 aa).

Belongs to the purine/pyrimidine phosphoribosyltransferase family. In terms of assembly, homodimer.

The protein resides in the cytoplasm. It catalyses the reaction AMP + diphosphate = 5-phospho-alpha-D-ribose 1-diphosphate + adenine. The protein operates within purine metabolism; AMP biosynthesis via salvage pathway; AMP from adenine: step 1/1. Its function is as follows. Catalyzes a salvage reaction resulting in the formation of AMP, that is energically less costly than de novo synthesis. This chain is Adenine phosphoribosyltransferase, found in Pseudomonas fluorescens (strain Pf0-1).